Here is a 399-residue protein sequence, read N- to C-terminus: Protein DDI1 homolog 2 (399 aa).

Positions 1 to 81 (MLLTVYCVRR…VILRQKENAD (81 aa)) constitute a Ubiquitin-like domain. The interval 99 to 134 (IAVPGTSSPRQRQPPGTQQSHSSPGEITSSPQGLDN) is disordered. Over residues 103 to 131 (GTSSPRQRQPPGTQQSHSSPGEITSSPQG) the composition is skewed to polar residues. A Phosphothreonine modification is found at Thr-104. A phosphoserine mark is found at Ser-106, Ser-121, Ser-128, Ser-150, and Ser-194. Residue Asp-252 is part of the active site. Residues 376–395 (EEIADQELAEALQKSAEDAE) carry the Ubiquitin-binding motif.

Belongs to the DDI1 family. In terms of assembly, homodimer. Interacts with MCM6; PCNA; PSMD4; PSMD8; RPA2 and RPN2. Interacts with RTF2.

The protein resides in the cytoplasm. The protein localises to the cytosol. Its subcellular location is the chromosome. Functionally, aspartic protease that mediates the cleavage of NFE2L1/NRF1 at 'Leu-104', thereby promoting release of NFE2L1/NRF1 from the endoplasmic reticulum membrane. Ubiquitination of NFE2L1/NRF1 is a prerequisite for cleavage, suggesting that DDI2 specifically recognizes and binds ubiquitinated NFE2L1/NRF1. Seems to act as a proteasomal shuttle which links the proteasome and replication fork proteins like RTF2. Required, with DDI1, for cellular survival following replication stress. Together or redudantly with DDI1, removes RTF2 from stalled forks to allow cell cycle progression after replication stress and maintains genome integrity. This Homo sapiens (Human) protein is Protein DDI1 homolog 2.